The sequence spans 222 residues: Putative hemin import ATP-binding protein HrtA (222 aa).

Residues 3 to 222 (LVVKDISKTF…QLYDGKIKNS (220 aa)) enclose the ABC transporter domain. 39-46 (GASGSGKT) provides a ligand contact to ATP.

The protein belongs to the ABC transporter superfamily. HrtA family. The complex is composed of two ATP-binding proteins (HrtA), two transmembrane proteins (HrtB) and a solute-binding protein.

It is found in the cell membrane. Part of the ABC transporter complex hrt involved in hemin import. Responsible for energy coupling to the transport system. The chain is Putative hemin import ATP-binding protein HrtA (hrtA) from Staphylococcus epidermidis (strain ATCC 12228 / FDA PCI 1200).